The chain runs to 463 residues: L-seryl-tRNA(Sec) selenium transferase (463 aa).

K295 is modified (N6-(pyridoxal phosphate)lysine).

Belongs to the SelA family. In terms of assembly, homodecamer; pentamer of dimers. Binds only one seryl-tRNA(Sec) per dimer. Pyridoxal 5'-phosphate serves as cofactor.

It localises to the cytoplasm. It carries out the reaction L-seryl-tRNA(Sec) + selenophosphate + H(+) = L-selenocysteinyl-tRNA(Sec) + phosphate. The protein operates within aminoacyl-tRNA biosynthesis; selenocysteinyl-tRNA(Sec) biosynthesis; selenocysteinyl-tRNA(Sec) from L-seryl-tRNA(Sec) (bacterial route): step 1/1. Converts seryl-tRNA(Sec) to selenocysteinyl-tRNA(Sec) required for selenoprotein biosynthesis. The sequence is that of L-seryl-tRNA(Sec) selenium transferase from Shigella boydii serotype 18 (strain CDC 3083-94 / BS512).